The chain runs to 1526 residues: Probable autotransporter YpjA (1526 aa).

Positions 1–29 are cleaved as a signal peptide; sequence MNRTSPYYCRRSVLSLLISALIYAPPGMA. The segment at 1173-1223 is disordered; that stretch reads NSNWNLTNDVKPNPDPIPNPKPDPKPDPKPDPNPKPDPTPDPTPTPVPEKR. Basic and acidic residues predominate over residues 1194 to 1206; it reads PDPKPDPKPDPNP. Over residues 1207-1219 the composition is skewed to pro residues; sequence KPDPTPDPTPTPV. The region spanning 1258-1526 is the Autotransporter domain; it reads ASPHNNNVWG…NAVAGVNWSF (269 aa).

It localises to the cell outer membrane. Functionally, upon overexpression shows increased adherence to polyvinyl chloride (PVC) plates, increased mature biofilm formation. This chain is Probable autotransporter YpjA (ypjA), found in Escherichia coli (strain K12).